We begin with the raw amino-acid sequence, 251 residues long: Demethylmenaquinone methyltransferase (251 aa).

Residues Thr-66, Asp-87, and 115–116 (NA) each bind S-adenosyl-L-methionine.

The protein belongs to the class I-like SAM-binding methyltransferase superfamily. MenG/UbiE family.

It catalyses the reaction a 2-demethylmenaquinol + S-adenosyl-L-methionine = a menaquinol + S-adenosyl-L-homocysteine + H(+). Its pathway is quinol/quinone metabolism; menaquinone biosynthesis; menaquinol from 1,4-dihydroxy-2-naphthoate: step 2/2. Functionally, methyltransferase required for the conversion of demethylmenaquinol (DMKH2) to menaquinol (MKH2). The polypeptide is Demethylmenaquinone methyltransferase (Symbiobacterium thermophilum (strain DSM 24528 / JCM 14929 / IAM 14863 / T)).